Consider the following 527-residue polypeptide: NAD(P)H-quinone oxidoreductase chain 4 1 (527 aa).

Transmembrane regions (helical) follow at residues 5 to 25 (FPWLTTIILFPIVASLLLPII), 35 to 55 (WYSLIVGLIDFAIIIAAFCTG), 90 to 110 (LIILTGFITTLAIMAAWPVSF), 112 to 132 (PKLFYFLMLAMYGGQIAVFAV), 136 to 156 (LLFFLVWELELVPVYLILSIW), 168 to 188 (FILYTAGGSLFILIAALTMAF), 211 to 231 (LLLYAAFLIAYAVKLPIFPLH), 242 to 262 (TAPAHMLLAGILLKMGGYALL), 274 to 294 (AVFAPVLVILGVVNIVYAALT), 310 to 330 (ISHMGFVLIGMASFTDIGLSG), 331 to 351 (AVLQMISHGLIGASLFFLVGA), 386 to 406 (LALPGMSGFVAEVMVFIGFAT), 416 to 436 (VLVIFLSAVGVILTPIYLLSM), and 463 to 483 (VFIIGCLLVPIIGIGLYPKIV).

It belongs to the complex I subunit 4 family.

It is found in the cellular thylakoid membrane. It catalyses the reaction a plastoquinone + NADH + (n+1) H(+)(in) = a plastoquinol + NAD(+) + n H(+)(out). The catalysed reaction is a plastoquinone + NADPH + (n+1) H(+)(in) = a plastoquinol + NADP(+) + n H(+)(out). NDH-1 shuttles electrons from NAD(P)H, via FMN and iron-sulfur (Fe-S) centers, to quinones in the respiratory chain. The immediate electron acceptor for the enzyme in this species is believed to be plastoquinone. Couples the redox reaction to proton translocation (for every two electrons transferred, four hydrogen ions are translocated across the cytoplasmic membrane), and thus conserves the redox energy in a proton gradient. The polypeptide is NAD(P)H-quinone oxidoreductase chain 4 1 (Trichodesmium erythraeum (strain IMS101)).